The following is a 196-amino-acid chain: ATP synthase subunit b (196 aa).

Residues 24-44 (PLSELLIGTLSFALLVAFFFW) form a helical membrane-spanning segment.

The protein belongs to the ATPase B chain family. F-type ATPases have 2 components, F(1) - the catalytic core - and F(0) - the membrane proton channel. F(1) has five subunits: alpha(3), beta(3), gamma(1), delta(1), epsilon(1). F(0) has three main subunits: a(1), b(2) and c(10-14). The alpha and beta chains form an alternating ring which encloses part of the gamma chain. F(1) is attached to F(0) by a central stalk formed by the gamma and epsilon chains, while a peripheral stalk is formed by the delta and b chains.

The protein localises to the cell membrane. Functionally, f(1)F(0) ATP synthase produces ATP from ADP in the presence of a proton or sodium gradient. F-type ATPases consist of two structural domains, F(1) containing the extramembraneous catalytic core and F(0) containing the membrane proton channel, linked together by a central stalk and a peripheral stalk. During catalysis, ATP synthesis in the catalytic domain of F(1) is coupled via a rotary mechanism of the central stalk subunits to proton translocation. Its function is as follows. Component of the F(0) channel, it forms part of the peripheral stalk, linking F(1) to F(0). This chain is ATP synthase subunit b, found in Frankia casuarinae (strain DSM 45818 / CECT 9043 / HFP020203 / CcI3).